A 935-amino-acid chain; its full sequence is Protein HIRA (935 aa).

7 WD repeats span residues 14–58, 72–111, 131–170, 174–213, 222–261, 277–320, and 325–362; these read HDTG…DKKK, ESQS…NSMG, GHSM…DRIT, DIQL…CVKS, IEET…QTWK, RAMP…KPLF, and IFNH…IGEM. The interval 431–556 is disordered; sequence SSDIQLTKSM…RNKKRKVPAT (126 aa). Over residues 439–468 the composition is skewed to basic and acidic residues; sequence SMEDNSKENESKNSEKTMMEERNKQIDVRK. A compositionally biased stretch (polar residues) spans 480-492; it reads GTTTADPMTSLSS. The segment covering 520–542 has biased composition (acidic residues); that stretch reads DLEDSSDSDDDDEEEEEDMEISD.

This sequence belongs to the WD repeat HIR1 family.

It is found in the nucleus. Its function is as follows. Required for replication-independent chromatin assembly and for the periodic repression of histone gene transcription during the cell cycle. The sequence is that of Protein HIRA from Caenorhabditis elegans.